A 535-amino-acid chain; its full sequence is Alpha-1,3-mannosyl-glycoprotein 4-beta-N-acetylglucosaminyltransferase A (535 aa).

The Cytoplasmic segment spans residues 1–6; that stretch reads MRLRNG. Residues 7–27 form a helical; Signal-anchor for type II membrane protein membrane-spanning segment; it reads TVATVLAFITSFLTLSWYTTW. Topologically, residues 28-535 are lumenal; that stretch reads QNGKEKVIAY…NEIHIKKVTN (508 aa). The stretch at 31–57 forms a coiled coil; the sequence is KEKVIAYQREFLALKERLRIAEHRISQ. Asn77 and Asn458 each carry an N-linked (GlcNAc...) asparagine glycan. Residue Ser474 is modified to Phosphoserine.

The protein belongs to the glycosyltransferase 54 family. A divalent metal cation serves as cofactor. In terms of processing, N-glycosylated. In terms of tissue distribution, highly expressed in small intestine, kidney, lung and spleen. Weakly expressed in brain, heart and liver.

The protein resides in the golgi apparatus membrane. The protein localises to the secreted. It carries out the reaction N(4)-{beta-D-GlcNAc-(1-&gt;2)-alpha-D-Man-(1-&gt;3)-[beta-D-GlcNAc-(1-&gt;2)-alpha-D-Man-(1-&gt;6)]-beta-D-Man-(1-&gt;4)-beta-D-GlcNAc-(1-&gt;4)-beta-D-GlcNAc}-L-asparaginyl-[protein] + UDP-N-acetyl-alpha-D-glucosamine = N(4)-{beta-D-GlcNAc-(1-&gt;2)-[beta-D-GlcNAc-(1-&gt;4)]-alpha-D-Man-(1-&gt;3)-[beta-D-GlcNAc-(1-&gt;2)-alpha-D-Man-(1-&gt;6)]-beta-D-Man-(1-&gt;4)-beta-D-GlcNAc-(1-&gt;4)-beta-D-GlcNAc}-L-asparaginyl-[protein] + UDP + H(+). The enzyme catalyses an N(4)-{beta-D-GlcNAc-(1-&gt;2)-alpha-D-Man-(1-&gt;3)-[alpha-D-Man-(1-&gt;6)]-beta-D-Man-(1-&gt;4)-beta-D-GlcNAc-(1-&gt;4)-beta-D-GlcNAc}-L-asparaginyl-[protein] + UDP-N-acetyl-alpha-D-glucosamine = an N(4)-{beta-D-GlcNAc-(1-&gt;2)-[beta-D-GlcNAc-(1-&gt;4)]-alpha-D-Man-(1-&gt;3)-[alpha-D-Man-(1-&gt;6)]-beta-D-Man-(1-&gt;4)-beta-D-GlcNAc-(1-&gt;4)-beta-D-GlcNAc}-L-asparaginyl-[protein] + UDP + H(+). It catalyses the reaction an N(4)-{beta-D-GlcNAc-(1-&gt;2)-alpha-D-Man-(1-&gt;3)-[beta-D-GlcNAc-(1-&gt;2)-[beta-D-GlcNAc-(1-&gt;6)]-alpha-D-Man-(1-&gt;6)]-beta-D-Man-(1-&gt;4)-beta-D-GlcNAc-(1-&gt;4)-beta-D-GlcNAc}-L-asparaginyl-[protein] + UDP-N-acetyl-alpha-D-glucosamine = an N(4)-{beta-D-GlcNAc-(1-&gt;2)-[beta-D-GlcNAc-(1-&gt;4)]-alpha-D-Man-(1-&gt;3)-[beta-D-GlcNAc-(1-&gt;2)-[beta-D-GlcNAc-(1-&gt;6)]-alpha-D-Man-(1-&gt;6)]-beta-D-Man-(1-&gt;4)-beta-D-GlcNAc-(1-&gt;4)-beta-D-GlcNAc}-L-asparaginyl-[protein] + UDP + H(+). The catalysed reaction is an N(4)-{beta-D-GlcNAc-(1-&gt;2)-alpha-D-Man-(1-&gt;3)-[beta-D-GlcNAc-(1-&gt;2)-alpha-D-Man-(1-&gt;6)]-beta-D-Man-(1-&gt;4)-beta-D-GlcNAc-(1-&gt;4)-[alpha-L-Fuc-(1-&gt;6)]-beta-D-GlcNAc}-L-asparaginyl-[protein] + UDP-N-acetyl-alpha-D-glucosamine = N(4)-{beta-D-GlcNAc-(1-&gt;2)-[beta-D-GlcNAc-(1-&gt;4)]-alpha-D-Man-(1-&gt;3)-[beta-D-GlcNAc-(1-&gt;2)-alpha-D-Man-(1-&gt;6)]-beta-D-Man-(1-&gt;4)-beta-D-GlcNAc-(1-&gt;4)-[alpha-L-Fuc-(1-&gt;6)]-beta-D-GlcNAc}-asparaginyl-[protein] + UDP + H(+). It carries out the reaction an N(4)-{beta-D-GlcNAc-(1-&gt;2)-alpha-D-Man-(1-&gt;3)-[beta-D-Gal-(1-&gt;4)-beta-D-GlcNAc-(1-&gt;2)-alpha-D-Man-(1-&gt;6)]-beta-D-Man-(1-&gt;4)-beta-D-GlcNAc-(1-&gt;4)-beta-D-GlcNAc}-L-asparaginyl-[protein] + UDP-N-acetyl-alpha-D-glucosamine = an N(4)-{beta-D-GlcNAc-(1-&gt;2)-[beta-D-GlcNAc-(1-&gt;4)]-alpha-D-Man-(1-&gt;3)-[beta-D-Gal-(1-&gt;4)-beta-D-GlcNAc-(1-&gt;2)-alpha-D-Man-(1-&gt;6)]-beta-D-Man-(1-&gt;4)-beta-D-GlcNAc-(1-&gt;4)-beta-D-GlcNAc}-L-asparaginyl-[protein] + UDP + H(+). The enzyme catalyses N(4)-{beta-D-GlcNAc-(1-&gt;2)-alpha-D-Man-(1-&gt;3)-[alpha-D-Man-(1-&gt;3)-{alpha-D-Man-(1-&gt;6)}-alpha-D-Man-(1-&gt;6)]-beta-D-Man-(1-&gt;4)-beta-D-GlcNAc-(1-&gt;4)-beta-D-GlcNAc}-asparaginyl-[protein] + UDP-N-acetyl-alpha-D-glucosamine = N(4)-{beta-D-GlcNAc-(1-&gt;2)-[beta-D-GlcNAc-(1-&gt;4)]-alpha-D-Man-(1-&gt;3)-[alpha-D-Man-(1-&gt;3)-{alpha-D-Man-(1-&gt;6)}-alpha-D-Man-(1-&gt;6)]-beta-D-Man-(1-&gt;4)-beta-D-GlcNAc-(1-&gt;4)-beta-D-GlcNAc}-asparaginyl-[protein] + UDP + H(+). It catalyses the reaction N(4)-{beta-D-GlcNAc-(1-&gt;2)-alpha-D-Man-(1-&gt;3)-beta-D-Man-(1-&gt;4)-beta-D-GlcNAc-(1-&gt;4)-beta-D-GlcNAc}-asparaginyl-[protein] + UDP-N-acetyl-alpha-D-glucosamine = N(4)-{beta-D-GlcNAc-(1-&gt;2)-[beta-D-GlcNAc-(1-&gt;4)]-alpha-D-Man-(1-&gt;3)-beta-D-Man-(1-&gt;4)-beta-D-GlcNAc-(1-&gt;4)-beta-D-GlcNAc}-asparaginyl-[protein] + UDP + H(+). The protein operates within protein modification; protein glycosylation. With respect to regulation, inhibited by UDP. In terms of biological role, glycosyltransferase that catalyze the transfer of GlcNAc from UDP-GlcNAc to the GlcNAcbeta1-2Manalpha1-3 arm of the core structure of N-linked glycans through a beta1-4 linkage and participates in the production of tri- and tetra-antennary N-linked sugar chains. Involved in glucose transport by mediating SLC2A2/GLUT2 glycosylation, thereby controlling cell-surface expression of SLC2A2 in pancreatic beta cells. The protein is Alpha-1,3-mannosyl-glycoprotein 4-beta-N-acetylglucosaminyltransferase A of Bos taurus (Bovine).